A 370-amino-acid polypeptide reads, in one-letter code: UDP-N-acetylglucosamine--N-acetylmuramyl-(pentapeptide) pyrophosphoryl-undecaprenol N-acetylglucosamine transferase (370 aa).

UDP-N-acetyl-alpha-D-glucosamine contacts are provided by residues 14 to 16, Asn-125, Arg-168, Ser-196, and Gln-297; that span reads TGG.

It belongs to the glycosyltransferase 28 family. MurG subfamily.

The protein localises to the cell inner membrane. It carries out the reaction di-trans,octa-cis-undecaprenyl diphospho-N-acetyl-alpha-D-muramoyl-L-alanyl-D-glutamyl-meso-2,6-diaminopimeloyl-D-alanyl-D-alanine + UDP-N-acetyl-alpha-D-glucosamine = di-trans,octa-cis-undecaprenyl diphospho-[N-acetyl-alpha-D-glucosaminyl-(1-&gt;4)]-N-acetyl-alpha-D-muramoyl-L-alanyl-D-glutamyl-meso-2,6-diaminopimeloyl-D-alanyl-D-alanine + UDP + H(+). It participates in cell wall biogenesis; peptidoglycan biosynthesis. In terms of biological role, cell wall formation. Catalyzes the transfer of a GlcNAc subunit on undecaprenyl-pyrophosphoryl-MurNAc-pentapeptide (lipid intermediate I) to form undecaprenyl-pyrophosphoryl-MurNAc-(pentapeptide)GlcNAc (lipid intermediate II). The polypeptide is UDP-N-acetylglucosamine--N-acetylmuramyl-(pentapeptide) pyrophosphoryl-undecaprenol N-acetylglucosamine transferase (Nitrobacter hamburgensis (strain DSM 10229 / NCIMB 13809 / X14)).